Here is a 299-residue protein sequence, read N- to C-terminus: MPESKRLRIAIQKSGRLSIESMKLLKSCGVKFTVNEQRLIAHSDNMPIDLLRVRDDDIPGLVMDGVVDMGIIGENVLEEEQIERERLDKPSTCIKLRELDFGACRLSLAVPNEFNYEDAASLEGLRIATSYPNLLRRYMQRKGITYNDCMLKGSVEVAPRAGLSDAICDLVSTGATLEANGLYETEVIYQSKACIIQSSQPQEPAKQALIDKILSRINGVVRAKESKYILLHAPTETLEQIVALLPGAENPTVLPLNDDTNRVAIHAVSTEDLFWDTMEELTKLGASSILVMPIEKMMG.

This sequence belongs to the ATP phosphoribosyltransferase family. Long subfamily. Mg(2+) serves as cofactor.

It localises to the cytoplasm. It carries out the reaction 1-(5-phospho-beta-D-ribosyl)-ATP + diphosphate = 5-phospho-alpha-D-ribose 1-diphosphate + ATP. It functions in the pathway amino-acid biosynthesis; L-histidine biosynthesis; L-histidine from 5-phospho-alpha-D-ribose 1-diphosphate: step 1/9. With respect to regulation, feedback inhibited by histidine. Functionally, catalyzes the condensation of ATP and 5-phosphoribose 1-diphosphate to form N'-(5'-phosphoribosyl)-ATP (PR-ATP). Has a crucial role in the pathway because the rate of histidine biosynthesis seems to be controlled primarily by regulation of HisG enzymatic activity. The sequence is that of ATP phosphoribosyltransferase from Shewanella sediminis (strain HAW-EB3).